The sequence spans 393 residues: MTTEVNQLSEHPLVSPKAEPQPETKPENLPRSHGDVGLQKETVVPGIVDFELIHEELKTTKPQTSQPTPSAYRFGRLSHHSFFSRHHPQPQRVTHIQVTGREDLEHSLPLTTSFQLLQAPGVQPMDLTPSADIAGKPVCVVRDEFSLSALTQPTFLSRCLMGMPTISVPIGDPQSNRNPQLSTSDTWRKKLKDLASRVTVFTKEIQPKPDEQKEEPPLREPPPREQGAKYSAETGRLIPASSQALTRRNRQGQRVHPSSKDGGVQASILQDQELLILELLCQILQTDSLRAIQFWLLYAPSKEKDLALGLLQTAVAQLIPQPLSSIPAEKLWNHLQELQEPQETQEAAYSPSLKKTRSPPLPKTDKPEYIGKAQVLLVHPSEDPEEKTTKAES.

4 disordered regions span residues 1–39 (MTTEVNQLSEHPLVSPKAEPQPETKPENLPRSHGDVGLQ), 168–188 (VPIGDPQSNRNPQLSTSDTWR), 202–264 (TKEI…DGGV), and 340–393 (EPQE…KAES). Positions 20–34 (PQPETKPENLPRSHG) are enriched in basic and acidic residues. Residues 173–185 (PQSNRNPQLSTSD) show a composition bias toward polar residues. Composition is skewed to basic and acidic residues over residues 205–227 (IQPKPDEQKEEPPLREPPPREQG) and 380–393 (PSEDPEEKTTKAES).

Belongs to the TBATA family. Interacts with KIF17. Interacts with UBA3. Expressed in the subcapsular region of the thymus and lymph node (at protein level). Highly expressed in thymic cortical stromal cells and testis. Lower levels found in brain cortex, hippocampus, kidney, cerebellum, skeletal muscle, epididymis and ovary. No expression detected in other lymphoid organs including bone marrow and spleen. Isoform 1 and isoform 2 are expressed predominantly in testis. Isoform 3, isoform 4 and isoform 5 are expressed predominantly in thymus although isoform 3 is also expressed in testis. In the CNS, highly expressed in restricted areas, the cerebellum and hippocampus.

The protein localises to the cytoplasm. Its subcellular location is the cytosol. It localises to the nucleus. In terms of biological role, isoform 1 and isoform 2 may play a role in spermatid differentiation. Isoform 1 and isoform 2 regulate thymus function by modulating stromal cell proliferation via interference with the NEDD8 pathway. This is Protein TBATA (Tbata) from Mus musculus (Mouse).